The sequence spans 143 residues: Putative transcriptional regulatory protein PH0763 (143 aa).

The protein belongs to the Tfx family.

Its function is as follows. Putative transcriptional regulator. The sequence is that of Putative transcriptional regulatory protein PH0763 from Pyrococcus horikoshii (strain ATCC 700860 / DSM 12428 / JCM 9974 / NBRC 100139 / OT-3).